The sequence spans 485 residues: Ribulose bisphosphate carboxylase large chain (485 aa).

Substrate contacts are provided by Asn124 and Thr174. Lys176 functions as the Proton acceptor in the catalytic mechanism. Lys178 contacts substrate. Positions 202, 204, and 205 each coordinate Mg(2+). Lys202 carries the N6-carboxylysine modification. The Proton acceptor role is filled by His294. Substrate-binding residues include Arg295, His327, and Ser379.

The protein belongs to the RuBisCO large chain family. Type I subfamily. In terms of assembly, heterohexadecamer of 8 large chains and 8 small chains. It depends on Mg(2+) as a cofactor.

It catalyses the reaction 2 (2R)-3-phosphoglycerate + 2 H(+) = D-ribulose 1,5-bisphosphate + CO2 + H2O. The catalysed reaction is D-ribulose 1,5-bisphosphate + O2 = 2-phosphoglycolate + (2R)-3-phosphoglycerate + 2 H(+). In terms of biological role, ruBisCO catalyzes two reactions: the carboxylation of D-ribulose 1,5-bisphosphate, the primary event in carbon dioxide fixation, as well as the oxidative fragmentation of the pentose substrate. Both reactions occur simultaneously and in competition at the same active site. The polypeptide is Ribulose bisphosphate carboxylase large chain (Rhodopseudomonas palustris (strain TIE-1)).